Consider the following 227-residue polypeptide: Cytochrome c oxidase subunit 2 (227 aa).

Over 1 to 14 (MAYPMQLGFQDATS) the chain is Mitochondrial intermembrane. Residues 15-45 (PIMEELLHFHDHTLMIVFLISSLVLYVISLM) form a helical membrane-spanning segment. Topologically, residues 46 to 59 (LTTKLTHTSTMDAQ) are mitochondrial matrix. The helical transmembrane segment at 60–87 (EVETIWTILPAIILILIALPSLRILYMM) threads the bilayer. Over 88 to 227 (DEINNPSLTV…YFEKWSASML (140 aa)) the chain is Mitochondrial intermembrane. Cu cation contacts are provided by H161, C196, E198, C200, H204, and M207. Residue E198 coordinates Mg(2+).

It belongs to the cytochrome c oxidase subunit 2 family. In terms of assembly, component of the cytochrome c oxidase (complex IV, CIV), a multisubunit enzyme composed of 14 subunits. The complex is composed of a catalytic core of 3 subunits MT-CO1, MT-CO2 and MT-CO3, encoded in the mitochondrial DNA, and 11 supernumerary subunits COX4I, COX5A, COX5B, COX6A, COX6B, COX6C, COX7A, COX7B, COX7C, COX8 and NDUFA4, which are encoded in the nuclear genome. The complex exists as a monomer or a dimer and forms supercomplexes (SCs) in the inner mitochondrial membrane with NADH-ubiquinone oxidoreductase (complex I, CI) and ubiquinol-cytochrome c oxidoreductase (cytochrome b-c1 complex, complex III, CIII), resulting in different assemblies (supercomplex SCI(1)III(2)IV(1) and megacomplex MCI(2)III(2)IV(2)). Found in a complex with TMEM177, COA6, COX18, COX20, SCO1 and SCO2. Interacts with TMEM177 in a COX20-dependent manner. Interacts with COX20. Interacts with COX16. It depends on Cu cation as a cofactor.

Its subcellular location is the mitochondrion inner membrane. It carries out the reaction 4 Fe(II)-[cytochrome c] + O2 + 8 H(+)(in) = 4 Fe(III)-[cytochrome c] + 2 H2O + 4 H(+)(out). Component of the cytochrome c oxidase, the last enzyme in the mitochondrial electron transport chain which drives oxidative phosphorylation. The respiratory chain contains 3 multisubunit complexes succinate dehydrogenase (complex II, CII), ubiquinol-cytochrome c oxidoreductase (cytochrome b-c1 complex, complex III, CIII) and cytochrome c oxidase (complex IV, CIV), that cooperate to transfer electrons derived from NADH and succinate to molecular oxygen, creating an electrochemical gradient over the inner membrane that drives transmembrane transport and the ATP synthase. Cytochrome c oxidase is the component of the respiratory chain that catalyzes the reduction of oxygen to water. Electrons originating from reduced cytochrome c in the intermembrane space (IMS) are transferred via the dinuclear copper A center (CU(A)) of subunit 2 and heme A of subunit 1 to the active site in subunit 1, a binuclear center (BNC) formed by heme A3 and copper B (CU(B)). The BNC reduces molecular oxygen to 2 water molecules using 4 electrons from cytochrome c in the IMS and 4 protons from the mitochondrial matrix. This is Cytochrome c oxidase subunit 2 (MT-CO2) from Gazella spekei (Speke's gazelle).